A 140-amino-acid polypeptide reads, in one-letter code: Nucleoside diphosphate kinase (140 aa).

Lysine 11, phenylalanine 59, arginine 87, threonine 93, arginine 104, and asparagine 114 together coordinate ATP. Residue histidine 117 is the Pros-phosphohistidine intermediate of the active site.

It belongs to the NDK family. As to quaternary structure, homotetramer. The cofactor is Mg(2+).

The protein localises to the cytoplasm. The catalysed reaction is a 2'-deoxyribonucleoside 5'-diphosphate + ATP = a 2'-deoxyribonucleoside 5'-triphosphate + ADP. It carries out the reaction a ribonucleoside 5'-diphosphate + ATP = a ribonucleoside 5'-triphosphate + ADP. In terms of biological role, major role in the synthesis of nucleoside triphosphates other than ATP. The ATP gamma phosphate is transferred to the NDP beta phosphate via a ping-pong mechanism, using a phosphorylated active-site intermediate. This Rickettsia typhi (strain ATCC VR-144 / Wilmington) protein is Nucleoside diphosphate kinase.